A 671-amino-acid chain; its full sequence is K(+)-insensitive pyrophosphate-energized proton pump (671 aa).

5 helical membrane passes run 3-23, 57-77, 79-99, 128-148, and 156-176; these read SLIFIAPLAGVISLVFAAFFA, TIAVVSIILSFLILFLLDDGL, IAIGFLAGAISSAAAGYIGMS, AVTGLAVVGLALLGTSSFYIL, and VGFGFGASLISLFARVGGGIF. Lys-178 is a substrate binding site. Mg(2+) is bound by residues Asp-181, Asp-185, Asn-208, and Asp-211. The next 6 membrane-spanning stretches (helical) occupy residues 223-243, 249-269, 285-305, 310-330, 366-386, and 391-411; these read LFETYVVTSLAAMLLGSLIIG, ILYPLVLGSVAIFASIISVFF, GVGGSAIISLIAFYFVTNSLM, LFYATVVGIIITVLMVIITEY, LVPTVVIVIGILISYFIVGGA, and IGLYGIAIAAVAMLSTTGMIV. Asp-421 lines the Mg(2+) pocket. Transmembrane regions (helical) follow at residues 452 to 472, 490 to 510, 558 to 578, and 580 to 600; these read AVTKGYAIGSAALGALALFAD, VVLAGLLLGALLPFVFSAVTM, MAMPGFLAVLVPLLVGLILGP, and ALAGLLIGLIVVGFMLALMMD. Asp-607, Asp-633, and Asp-637 together coordinate Ca(2+). Lys-640 contacts substrate. Residues 646-666 form a helical membrane-spanning segment; sequence ALNALIKVVNMVAILFSSLII.

The protein belongs to the H(+)-translocating pyrophosphatase (TC 3.A.10) family. K(+)-insensitive subfamily. In terms of assembly, homodimer. Mg(2+) is required as a cofactor.

The protein resides in the cell membrane. It catalyses the reaction diphosphate + H2O + H(+)(in) = 2 phosphate + 2 H(+)(out). In terms of biological role, proton pump that utilizes the energy of pyrophosphate hydrolysis as the driving force for proton movement across the membrane. Generates a proton motive force. The polypeptide is K(+)-insensitive pyrophosphate-energized proton pump (Methanosarcina acetivorans (strain ATCC 35395 / DSM 2834 / JCM 12185 / C2A)).